A 131-amino-acid polypeptide reads, in one-letter code: Large ribosomal subunit protein bL12 (131 aa).

The protein belongs to the bacterial ribosomal protein bL12 family. As to quaternary structure, homodimer. Part of the ribosomal stalk of the 50S ribosomal subunit. Forms a multimeric L10(L12)X complex, where L10 forms an elongated spine to which 2 to 4 L12 dimers bind in a sequential fashion. Binds GTP-bound translation factors.

Functionally, forms part of the ribosomal stalk which helps the ribosome interact with GTP-bound translation factors. Is thus essential for accurate translation. This chain is Large ribosomal subunit protein bL12, found in Nocardioides sp. (strain ATCC BAA-499 / JS614).